The chain runs to 529 residues: DEP domain-containing protein 1B (529 aa).

The DEP domain occupies 24 to 108; the sequence is FRAKMPLRKH…DNRHLYRFPP (85 aa). Serine 160 carries the phosphoserine modification. The Rho-GAP domain maps to 201 to 393; that stretch reads DSLEEVLDVK…FLMDNYQEIL (193 aa). At serine 436 the chain carries Phosphoserine.

The protein is DEP domain-containing protein 1B (DEPDC1B) of Homo sapiens (Human).